A 123-amino-acid chain; its full sequence is U9-barytoxin-Tl1a (123 aa).

An N-terminal signal peptide occupies residues 1 to 18 (MNTMITFLVLFVLTAANG). A propeptide spanning residues 19-77 (APEANERKIPEAIHNEDQSLAEMAEELMFFLQQTEFEAPLLQEEEEAEXAEXRNSRERR) is cleaved from the precursor. Cystine bridges form between cysteine 78/cysteine 93, cysteine 85/cysteine 98, and cysteine 92/cysteine 112.

This sequence belongs to the neurotoxin 14 (magi-1) family. 05 (ICK-7) subfamily. ICK-7 sub-subfamily. In terms of tissue distribution, expressed by the venom gland.

The protein resides in the secreted. Its function is as follows. Ion channel inhibitor. This chain is U9-barytoxin-Tl1a, found in Trittame loki (Brush-footed trapdoor spider).